A 298-amino-acid polypeptide reads, in one-letter code: GTP cyclohydrolase FolE2 (298 aa).

The protein belongs to the GTP cyclohydrolase IV family.

It carries out the reaction GTP + H2O = 7,8-dihydroneopterin 3'-triphosphate + formate + H(+). Its pathway is cofactor biosynthesis; 7,8-dihydroneopterin triphosphate biosynthesis; 7,8-dihydroneopterin triphosphate from GTP: step 1/1. Its function is as follows. Converts GTP to 7,8-dihydroneopterin triphosphate. This Pseudomonas fluorescens (strain SBW25) protein is GTP cyclohydrolase FolE2.